The chain runs to 459 residues: Glycosyl hydrolase family 109 protein (459 aa).

Positions 1–31 (MHNIHRRHFLKAAGAVTAGLITANITASTHA) form a signal peptide, tat-type signal. NAD(+)-binding positions include 64 to 65 (ER), Asp-86, 135 to 138 (WEWH), 155 to 156 (EV), and Asn-184. Residues Tyr-213, Arg-232, 244–247 (YPTH), and Tyr-326 contribute to the substrate site. Residue Tyr-244 participates in NAD(+) binding.

This sequence belongs to the Gfo/Idh/MocA family. Glycosyl hydrolase 109 subfamily. Requires NAD(+) as cofactor. In terms of processing, predicted to be exported by the Tat system. The position of the signal peptide cleavage has not been experimentally proven.

Its function is as follows. Glycosidase. In Shewanella putrefaciens (strain CN-32 / ATCC BAA-453), this protein is Glycosyl hydrolase family 109 protein.